The chain runs to 544 residues: Protein angel homolog 2 (544 aa).

The protein belongs to the CCR4/nocturin family.

This Bos taurus (Bovine) protein is Protein angel homolog 2 (ANGEL2).